A 3573-amino-acid chain; its full sequence is Zinc finger homeobox protein 4 (3573 aa).

Positions 1–28 (METCDSPTISRQENGQSTSKLCGTTQLD) are enriched in polar residues. Disordered regions lie at residues 1-54 (METC…LRTD), 425-479 (LSHS…DTYS), and 522-606 (TSSS…GSPG). 2 stretches are compositionally biased toward basic and acidic residues: residues 39–54 (EPDR…LRTD) and 434–452 (KLSE…KETN). A compositionally biased stretch (acidic residues) spans 468-479 (EPVEEEDEDTYS). A compositionally biased stretch (polar residues) spans 585 to 599 (SVTPHQHSFTPSTPS). 3 consecutive C2H2-type zinc fingers follow at residues 609-632 (IECP…TMMH), 640-663 (LKCP…KEKH), and 695-719 (FRCE…SDKH). A C2H2-type 4; degenerate zinc finger spans residues 763–785 (WRCEVCDYETNVARNLRIHMTSE). 3 C2H2-type zinc fingers span residues 913–937 (YQCK…TDKH), 969–991 (LKCN…TTNH), and 1017–1041 (YYCA…SVKH). The tract at residues 1096–1132 (GEDTEGSAKSTSVAIGDDKDSSERDNTEAKKSSKDSV) is disordered. Residues 1111–1129 (GDDKDSSERDNTEAKKSSK) are compositionally biased toward basic and acidic residues. C2H2-type zinc fingers lie at residues 1168–1191 (YQCP…LSQH) and 1197–1220 (ICCP…THLH). The segment at 1250-1340 (AASEKSERDT…EQQKKQQLSV (91 aa)) is disordered. The span at 1277–1306 (VDEKSTPGTDESKPGMEIKSEEQKPPKESA) shows a compositional bias: basic and acidic residues. Polar residues predominate over residues 1322 to 1340 (TDSMPDQLNEQQKKQQLSV). 2 C2H2-type zinc fingers span residues 1348-1370 (YRCN…SQYH) and 1376-1399 (TMCS…EAGH). Positions 1442-1476 (YEMEQEGKASPVGSDSSSIPDDMGSEPKRTLPFRK) are disordered. 2 consecutive C2H2-type zinc fingers follow at residues 1492–1518 (YKCT…SHLH) and 1544–1568 (YKCS…SVLH). Disordered regions lie at residues 1577–1596 (LEPS…VNSP) and 1795–1843 (YKES…IASG). Low complexity predominate over residues 1580–1596 (SGNISSGNSVAGNVNSP). Basic and acidic residues predominate over residues 1795 to 1830 (YKESEEISEKQEKPKQEFTNESEGLKENKDMKKPKS). A C2H2-type 14 zinc finger spans residues 1886-1909 (LECGTCSKLFSNILILKSHQEHVH). Positions 1933-2013 (YPISPSSPET…PSAPPQVQLP (81 aa)) are disordered. 2 stretches are compositionally biased toward pro residues: residues 1940–1962 (PETP…PTPS) and 1980–2007 (LQAP…PSAP). 2 DNA-binding regions (homeobox) span residues 2072–2131 (FKRP…RQRN) and 2169–2228 (KRSS…RKSY). The segment at 2255-2279 (YQCKKCSVVFPRIFDLITHQKKQCY) adopts a C2H2-type 15; degenerate zinc-finger fold. Disordered stretches follow at residues 2278–2300 (CYKD…DASD) and 2318–2426 (SLAV…TPLQ). Residues 2281–2297 (DEDDDAQDESQTEDSMD) show a composition bias toward acidic residues. Positions 2318-2334 (SLAVTAASSGSGSSTPL) are enriched in low complexity. Positions 2340–2357 (PEPEKASPKSESTEKPKP) are enriched in basic and acidic residues. Low complexity-rich tracts occupy residues 2360 to 2373 (TISK…QSSK) and 2382 to 2413 (PSDP…TTPV). The segment at 2436-2458 (YQCDQCTVAFPTLELWQEHQHMH) adopts a C2H2-type 16 zinc-finger fold. The segment covering 2499–2509 (LAQMPPQTGSS) has biased composition (polar residues). The segment at 2499 to 2553 (LAQMPPQTGSSHAAHPATVSGSMKRKLDDKEDNNCSEKEGGNSGEDQHRDKRLRT) is disordered. The segment covering 2523 to 2547 (RKLDDKEDNNCSEKEGGNSGEDQHR) has biased composition (basic and acidic residues). Residues 2548 to 2607 (DKRLRTTITPEQLEILYEKYLLDSNPTRKMLDHIAREVGLKKRVVQVWFQNTRARERKGQ) constitute a DNA-binding region (homeobox 3). Residues 2618-2641 (KRCPFCRALFKAKSALESHIRSRH) form a C2H2-type 17 zinc finger. Disordered stretches follow at residues 2704 to 2788 (EMSP…PKPL) and 2820 to 2875 (FSEK…PGHK). Composition is skewed to polar residues over residues 2709–2718 (NLLSPSSFKA) and 2746–2773 (TSSI…TGSS). Basic and acidic residues predominate over residues 2820-2829 (FSEKDGDHDQ). The segment at residues 2874–2933 (HKRFRTQMSNLQLKVLKACFSDYRTPTMQECEMLGNEIGLPKRVVQVWFQNARAKEKKFK) is a DNA-binding region (homeobox 4). The C2H2-type 18; degenerate zinc-finger motif lies at 2952–2976 (PECSLCGVKYSARLSIRDHIFSKQH). Disordered regions lie at residues 3060 to 3174 (PSSL…KHLK) and 3287 to 3343 (LQKQ…LDSK). Over residues 3084–3104 (PTSATSSPALSLSSAPSKPLL) the composition is skewed to low complexity. Positions 3105-3129 (QTPPPPPPPPPPPPPPPPPPPPPPS) are enriched in pro residues. The span at 3159–3174 (IKEEELEANKPEKHLK) shows a compositional bias: basic and acidic residues. The stretch at 3271 to 3316 (ALLQQYQQYQQNLQDSLQKQQKQQQEQQQKQVQAKSSKAENDQQQN) forms a coiled coil. The span at 3287 to 3305 (LQKQQKQQQEQQQKQVQAK) shows a compositional bias: low complexity. A compositionally biased stretch (basic and acidic residues) spans 3321–3343 (SETKEDRSSATESTKEEPQLDSK). Residues 3360–3384 (FICRKCQMMFTDEDAAVNHQKSFCY) form a C2H2-type 19; degenerate zinc finger. A C2H2-type 20 zinc finger spans residues 3404–3428 (YQCLACDVAISGNEALSQHLQSSLH). Disordered regions lie at residues 3449-3468 (HSVC…AASS) and 3518-3543 (TSGV…QKLE). Low complexity predominate over residues 3453–3468 (SPNPNTTSTSQSAASS).

Belongs to the krueppel C2H2-type zinc-finger protein family.

It is found in the nucleus. Its function is as follows. May play a role in neural and muscle differentiation. May be involved in transcriptional regulation. This Gallus gallus (Chicken) protein is Zinc finger homeobox protein 4 (ZFHX4).